Reading from the N-terminus, the 199-residue chain is Probable GTP-binding protein EngB (199 aa).

The region spanning 28–199 is the EngB-type G domain; sequence DLPEIALAGR…DSWDAILEQV (172 aa). Residues 36–43, 63–67, 81–84, 148–151, and 180–182 each bind GTP; these read GRSNVGKS, GKTQL, DVPG, TKAD, and FSS. Residues S43 and T65 each coordinate Mg(2+).

Belongs to the TRAFAC class TrmE-Era-EngA-EngB-Septin-like GTPase superfamily. EngB GTPase family. The cofactor is Mg(2+).

Necessary for normal cell division and for the maintenance of normal septation. This is Probable GTP-binding protein EngB from Streptococcus pyogenes serotype M6 (strain ATCC BAA-946 / MGAS10394).